A 376-amino-acid polypeptide reads, in one-letter code: N-acetyldiaminopimelate deacetylase (376 aa).

Aspartate 69 is a catalytic residue. Residue glutamate 128 is the Proton acceptor of the active site.

This sequence belongs to the peptidase M20A family. N-acetyldiaminopimelate deacetylase subfamily.

It catalyses the reaction N-acetyl-(2S,6S)-2,6-diaminopimelate + H2O = (2S,6S)-2,6-diaminopimelate + acetate. Its pathway is amino-acid biosynthesis; L-lysine biosynthesis via DAP pathway; LL-2,6-diaminopimelate from (S)-tetrahydrodipicolinate (acetylase route): step 3/3. Its function is as follows. Catalyzes the conversion of N-acetyl-diaminopimelate to diaminopimelate and acetate. This Bacillus cereus (strain G9842) protein is N-acetyldiaminopimelate deacetylase.